Consider the following 87-residue polypeptide: Small ribosomal subunit protein bS20 (87 aa).

A disordered region spans residues 1–20; sequence MANSAQARKRARTALKQRAH. Residues 7–19 are compositionally biased toward basic residues; sequence ARKRARTALKQRA.

The protein belongs to the bacterial ribosomal protein bS20 family.

Functionally, binds directly to 16S ribosomal RNA. This chain is Small ribosomal subunit protein bS20, found in Chromobacterium violaceum (strain ATCC 12472 / DSM 30191 / JCM 1249 / CCUG 213 / NBRC 12614 / NCIMB 9131 / NCTC 9757 / MK).